The following is a 233-amino-acid chain: Small heat shock protein hspF (233 aa).

A sHSP domain is found at 129–233; that stretch reads IPLFTFFEPL…ILLITVNKFL (105 aa).

It belongs to the small heat shock protein (HSP20) family.

This Dictyostelium discoideum (Social amoeba) protein is Small heat shock protein hspF (hspF-1).